The following is a 790-amino-acid chain: PGC-1 and ERR-induced regulator in muscle protein 1 (790 aa).

Disordered regions lie at residues 38 to 391 (LLSS…TPIS), 425 to 449 (VASS…STPV), 507 to 545 (SVAG…EAVA), and 626 to 648 (QRSR…APIP). Positions 40–52 (SSDIDQGDSSGSS) are enriched in low complexity. Composition is skewed to polar residues over residues 80–89 (ATQQPVSRSQ) and 98–107 (TGQQTPSTSA). Positions 111–123 (APPSLGPGASPPS) are enriched in low complexity. Residues 146–157 (APRPPGEPPGSP) show a composition bias toward pro residues. Residues 158–169 (KSPGHSTGSQRP) are compositionally biased toward low complexity. The span at 170 to 179 (PDSPGAPPRS) shows a compositional bias: pro residues. A compositionally biased stretch (polar residues) spans 366–391 (KPQSDTAVSTPASEPQSSVALSTPIS). The segment covering 515–532 (KPGSGQASARPSAPQTAT) has biased composition (polar residues). The span at 635–648 (EPLPRADPVPAPIP) shows a compositional bias: pro residues.

In terms of tissue distribution, muscle-specific expression is increased by endurance exercise.

The protein localises to the cytoplasm. It is found in the nucleus. In terms of biological role, regulates the expression of selective PPARGC1A/B and ESRRA/B/G target genes with roles in glucose and lipid metabolism, energy transfer, contractile function, muscle mitochondrial biogenesis and oxidative capacity. Required for the efficient induction of MT-CO2, MT-CO3, COX4I1, TFB1M, TFB2M, POLRMT and SIRT3 by PPARGC1A. Positively regulates the PPARGC1A/ESRRG-induced expression of CKMT2, TNNI3 and SLC2A4 and negatively regulates the PPARGC1A/ESRRG-induced expression of PDK4. This chain is PGC-1 and ERR-induced regulator in muscle protein 1 (PERM1), found in Homo sapiens (Human).